Consider the following 297-residue polypeptide: Ribosomal RNA small subunit methyltransferase H (297 aa).

S-adenosyl-L-methionine contacts are provided by residues 37–39, Glu-56, Phe-87, Asp-102, and His-109; that span reads GGH.

It belongs to the methyltransferase superfamily. RsmH family.

It is found in the cytoplasm. It catalyses the reaction cytidine(1402) in 16S rRNA + S-adenosyl-L-methionine = N(4)-methylcytidine(1402) in 16S rRNA + S-adenosyl-L-homocysteine + H(+). Functionally, specifically methylates the N4 position of cytidine in position 1402 (C1402) of 16S rRNA. This Borrelia duttonii (strain Ly) protein is Ribosomal RNA small subunit methyltransferase H.